The chain runs to 545 residues: Lysine--tRNA ligase (545 aa).

Residues 33-41 carry the 'HIGH' region motif; the sequence is VSGLQHIGR. Residues 288–292 carry the 'KMSKS' region motif; sequence DMSSS.

This sequence belongs to the class-I aminoacyl-tRNA synthetase family.

Its subcellular location is the cytoplasm. The enzyme catalyses tRNA(Lys) + L-lysine + ATP = L-lysyl-tRNA(Lys) + AMP + diphosphate. In Aeropyrum pernix (strain ATCC 700893 / DSM 11879 / JCM 9820 / NBRC 100138 / K1), this protein is Lysine--tRNA ligase (lysS).